Reading from the N-terminus, the 185-residue chain is Bacteriocin UviA (185 aa).

Its function is as follows. May have a role in bacteriocin secretion or immunity. This is Bacteriocin UviA (uviA) from Clostridium perfringens.